We begin with the raw amino-acid sequence, 415 residues long: MATH domain and coiled-coil domain-containing protein At2g42465 (415 aa).

The 125-residue stretch at 6 to 130 (RKALTLTVTN…NDRFNIEIYI (125 aa)) folds into the MATH domain. Positions 244–341 (FKLEWLKAKL…LLKDTYSDLK (98 aa)) form a coiled coil.

The sequence is that of MATH domain and coiled-coil domain-containing protein At2g42465 from Arabidopsis thaliana (Mouse-ear cress).